A 55-amino-acid chain; its full sequence is Large ribosomal subunit protein bL33 (55 aa).

The protein belongs to the bacterial ribosomal protein bL33 family.

The chain is Large ribosomal subunit protein bL33 from Caulobacter vibrioides (strain ATCC 19089 / CIP 103742 / CB 15) (Caulobacter crescentus).